Here is a 152-residue protein sequence, read N- to C-terminus: UPF0756 membrane protein CA_C0092 (152 aa).

Transmembrane regions (helical) follow at residues 5-25, 50-70, 82-102, and 117-137; these read IILVVILGISIVGKATSVAIS, MFWGLVLLTAAILIPIAQGNV, FVGITALVLSFLTTYLSGVGL, and LILGSVAAAAFLGGVPVGPLI.

The protein belongs to the UPF0756 family.

The protein resides in the cell membrane. This chain is UPF0756 membrane protein CA_C0092, found in Clostridium acetobutylicum (strain ATCC 824 / DSM 792 / JCM 1419 / IAM 19013 / LMG 5710 / NBRC 13948 / NRRL B-527 / VKM B-1787 / 2291 / W).